The following is a 32-amino-acid chain: Cyclotide glopa A (32 aa).

A cross-link (cyclopeptide (Gly-Asn)) is located at residues glycine 1–asparagine 32. 3 disulfides stabilise this stretch: cysteine 6/cysteine 21, cysteine 10/cysteine 23, and cysteine 15/cysteine 29.

In terms of processing, this is a cyclic peptide.

Functionally, probably participates in a plant defense mechanism. The sequence is that of Cyclotide glopa A from Gloeospermum pauciflorum.